A 223-amino-acid chain; its full sequence is Small ribosomal subunit protein uS3 (223 aa).

One can recognise a KH type-2 domain in the interval 40–108; the sequence is IRELVHRELP…KVHLNIQEIR (69 aa).

Belongs to the universal ribosomal protein uS3 family. In terms of assembly, part of the 30S ribosomal subunit. Forms a tight complex with proteins S10 and S14.

Binds the lower part of the 30S subunit head. Binds mRNA in the 70S ribosome, positioning it for translation. The polypeptide is Small ribosomal subunit protein uS3 (Thermomicrobium roseum (strain ATCC 27502 / DSM 5159 / P-2)).